The chain runs to 210 residues: Claudin-4 (210 aa).

At 1 to 7 the chain is on the cytoplasmic side; that stretch reads MASMGLQ. The interaction with EPHA2 stretch occupies residues 1–103; that stretch reads MASMGLQVLG…GMLLSVVGGK (103 aa). Residues 8–28 form a helical membrane-spanning segment; the sequence is VLGISLAVLGWLGIILSCALP. Residues 29-81 lie on the Extracellular side of the membrane; that stretch reads MWRVTAFIGSNIVTAQTSWEGLWMNCVVQSTGQMQCKMYDSMLALPQDLQAAR. Residues Cys-54 and Cys-64 are joined by a disulfide bond. Residues 82–102 form a helical membrane-spanning segment; sequence ALMVISIIVGALGMLLSVVGG. The Cytoplasmic portion of the chain corresponds to 103-116; it reads KCTNCMEDETVKAK. Residues 117–137 form a helical membrane-spanning segment; sequence IMITAGAVFIVASMLIMVPVS. Residues 138-160 are Extracellular-facing; it reads WTAHNVIRDFYNPMVASGQKREM. Residues 161-181 form a helical membrane-spanning segment; the sequence is GASLYVGWAASGLLLLGGGLL. Topologically, residues 182–210 are cytoplasmic; it reads CCSCPPRSNDKPYSAKYSAARSVPASNYV. Tyr-209 bears the Phosphotyrosine; by EPHA2 mark. An interactions with TJP1, TJP2 and TJP3 region spans residues 209–210; the sequence is YV.

It belongs to the claudin family. In terms of assembly, can form heteropolymeric strands with other claudins. Interacts with CLDN8. Interacts with CLDN1. Directly interacts with TJP1/ZO-1, TJP2/ZO-2 and TJP3/ZO-3. Interacts with EPHA2; phosphorylates CLDN4 and may regulate tight junctions. Post-translationally, phosphorylated. Phosphorylation by EPHA2 is stimulated by EFNA1 and alters interaction with TJP1. As to expression, expressed primarily in lung and kidney. Present in both cortical and medullar collecting ducts (at protein level).

The protein resides in the cell junction. Its subcellular location is the tight junction. It is found in the cell membrane. The catalysed reaction is chloride(in) = chloride(out). It catalyses the reaction bromide(in) = bromide(out). It carries out the reaction iodide(out) = iodide(in). The enzyme catalyses fluoride(in) = fluoride(out). In terms of biological role, can associate with other claudins to regulate tight junction structural and functional strand dynamics. May coassemble with CLDN8 into tight junction strands containing anion-selective channels that convey paracellular chloride permeability in renal collecting ducts. May integrate into CLDN3 strands to modulate localized tight junction barrier properties. May disrupt strand assembly of channel-forming CLDN2 and CLDN15 and inhibit cation conductance. Cannot form tight junction strands on its own. This is Claudin-4 from Mus musculus (Mouse).